Consider the following 315-residue polypeptide: MTQFQIECVESKVESSCNQYGRFIVEPLEPGQGITIGNSLRRVLLSDIEGSAITAVRIAGVNHEFCSIPGVKEDVLELLLNLKNIVLKSYTNEPQIGRLKIQGACKVTTANFELPSEVEIIHGTQYVATVAENAILEMEFKIEKGRGYKIIDKKQTENSIDFLPIDAIFMPVRKVNYMVEEIFLRNSEIKERLILEIWRNGSVTPQDSISQAAEVLLNLFNPFKKINFENTDDSTEQTEDKISQIPIEELQLSVRAYNCLKRAQIHSIGDLLNVSQEELLEIRNFGQKSAKEVIDALQKRLGISLPKRKTNKKEN.

The segment at 1–227 is alpha N-terminal domain (alpha-NTD); it reads MTQFQIECVE…NLFNPFKKIN (227 aa). An alpha C-terminal domain (alpha-CTD) region spans residues 239–315; it reads EDKISQIPIE…PKRKTNKKEN (77 aa).

Belongs to the RNA polymerase alpha chain family. In plastids the minimal PEP RNA polymerase catalytic core is composed of four subunits: alpha, beta, beta', and beta''. When a (nuclear-encoded) sigma factor is associated with the core the holoenzyme is formed, which can initiate transcription.

The protein resides in the plastid. The protein localises to the cyanelle. It carries out the reaction RNA(n) + a ribonucleoside 5'-triphosphate = RNA(n+1) + diphosphate. In terms of biological role, DNA-dependent RNA polymerase catalyzes the transcription of DNA into RNA using the four ribonucleoside triphosphates as substrates. This chain is DNA-directed RNA polymerase subunit alpha, found in Cyanophora paradoxa.